The primary structure comprises 116 residues: MRHQCRVPLLGRPADQRKALLRGLTTQLIREGRVTTTKARAKALRDEAERMITLAKNGSLASRRRVLGYVYDKQLVHALFDKAPTRYGDRNGGYTRITRTVPRRGDNAEMAIIELV.

It belongs to the bacterial ribosomal protein bL17 family. In terms of assembly, part of the 50S ribosomal subunit. Contacts protein L32.

The protein is Large ribosomal subunit protein bL17 of Synechococcus sp. (strain CC9311).